Reading from the N-terminus, the 261-residue chain is Short-chain-enoyl-CoA hydratase (261 aa).

E114 (nucleophile) is an active-site residue. Catalysis depends on E134, which acts as the Proton acceptor.

It belongs to the enoyl-CoA hydratase/isomerase family. As to quaternary structure, homotetramer.

The catalysed reaction is a short-chain (3S)-3-hydroxyacyl-CoA = a short-chain (2E)-enoyl-CoA + H2O. The protein operates within lipid metabolism; butanoate metabolism. Functionally, catalyzes the reversible hydration of crotonyl-CoA. Can also use hexenoyl-CoA but not higher analogs. The chain is Short-chain-enoyl-CoA hydratase (crt) from Clostridium acetobutylicum (strain ATCC 824 / DSM 792 / JCM 1419 / IAM 19013 / LMG 5710 / NBRC 13948 / NRRL B-527 / VKM B-1787 / 2291 / W).